Here is a 398-residue protein sequence, read N- to C-terminus: Acetate kinase 2 (398 aa).

Mg(2+) is bound at residue N7. K14 contributes to the ATP binding site. R91 is a substrate binding site. Residue D148 is the Proton donor/acceptor of the active site. ATP contacts are provided by residues 208–212 (HLGNG), 283–285 (DFR), and 331–335 (GVGEN). E384 provides a ligand contact to Mg(2+).

The protein belongs to the acetokinase family. Homodimer. The cofactor is Mg(2+). Requires Mn(2+) as cofactor.

Its subcellular location is the cytoplasm. The catalysed reaction is acetate + ATP = acetyl phosphate + ADP. It functions in the pathway metabolic intermediate biosynthesis; acetyl-CoA biosynthesis; acetyl-CoA from acetate: step 1/2. In terms of biological role, catalyzes the formation of acetyl phosphate from acetate and ATP. Can also catalyze the reverse reaction. The polypeptide is Acetate kinase 2 (Clostridium perfringens (strain 13 / Type A)).